An 84-amino-acid polypeptide reads, in one-letter code: NADH-ubiquinone oxidoreductase chain 4L (84 aa).

2 helical membrane passes run 19-39 and 50-70; these read ITLL…LIHI and IFSL…LSIL.

The protein belongs to the complex I subunit 4L family.

It is found in the mitochondrion membrane. It carries out the reaction a ubiquinone + NADH + 5 H(+)(in) = a ubiquinol + NAD(+) + 4 H(+)(out). Core subunit of the mitochondrial membrane respiratory chain NADH dehydrogenase (Complex I) that is believed to belong to the minimal assembly required for catalysis. Complex I functions in the transfer of electrons from NADH to the respiratory chain. The immediate electron acceptor for the enzyme is believed to be ubiquinone. In Candida albicans (strain SC5314 / ATCC MYA-2876) (Yeast), this protein is NADH-ubiquinone oxidoreductase chain 4L (NAD4L).